We begin with the raw amino-acid sequence, 361 residues long: Peptide chain release factor 1 (361 aa).

Q237 is subject to N5-methylglutamine.

Belongs to the prokaryotic/mitochondrial release factor family. Post-translationally, methylated by PrmC. Methylation increases the termination efficiency of RF1.

The protein resides in the cytoplasm. Functionally, peptide chain release factor 1 directs the termination of translation in response to the peptide chain termination codons UAG and UAA. This chain is Peptide chain release factor 1, found in Thioalkalivibrio sulfidiphilus (strain HL-EbGR7).